Here is a 422-residue protein sequence, read N- to C-terminus: Enolase (422 aa).

Residue Q162 coordinates (2R)-2-phosphoglycerate. E204 (proton donor) is an active-site residue. Residues D241, E284, and D311 each coordinate Mg(2+). (2R)-2-phosphoglycerate contacts are provided by K336, R365, S366, and K387. The active-site Proton acceptor is the K336.

The protein belongs to the enolase family. In terms of assembly, component of the RNA degradosome, a multiprotein complex involved in RNA processing and mRNA degradation. The cofactor is Mg(2+).

The protein resides in the cytoplasm. Its subcellular location is the secreted. It localises to the cell surface. It carries out the reaction (2R)-2-phosphoglycerate = phosphoenolpyruvate + H2O. It functions in the pathway carbohydrate degradation; glycolysis; pyruvate from D-glyceraldehyde 3-phosphate: step 4/5. In terms of biological role, catalyzes the reversible conversion of 2-phosphoglycerate (2-PG) into phosphoenolpyruvate (PEP). It is essential for the degradation of carbohydrates via glycolysis. The sequence is that of Enolase from Legionella pneumophila (strain Lens).